The following is a 218-amino-acid chain: Ras-related protein RabO (218 aa).

15 to 22 (GDYCVGKT) provides a ligand contact to GTP. An Effector region motif is present at residues 37 to 45 (RNCNIGVDF). GTP-binding positions include 63-67 (DTGGQ) and 122-125 (NKID). Cysteine 215 is modified (cysteine methyl ester). A lipid anchor (S-geranylgeranyl cysteine) is attached at cysteine 215. A propeptide spans 216–218 (FIL) (removed in mature form).

The protein belongs to the small GTPase superfamily. Rab family.

It is found in the cell membrane. This Dictyostelium discoideum (Social amoeba) protein is Ras-related protein RabO (rabO).